We begin with the raw amino-acid sequence, 196 residues long: ATP synthase subunit b (196 aa).

Residues 24-44 (PLSELLIGTLSFALLVAFFFW) traverse the membrane as a helical segment.

Belongs to the ATPase B chain family. F-type ATPases have 2 components, F(1) - the catalytic core - and F(0) - the membrane proton channel. F(1) has five subunits: alpha(3), beta(3), gamma(1), delta(1), epsilon(1). F(0) has three main subunits: a(1), b(2) and c(10-14). The alpha and beta chains form an alternating ring which encloses part of the gamma chain. F(1) is attached to F(0) by a central stalk formed by the gamma and epsilon chains, while a peripheral stalk is formed by the delta and b chains.

The protein resides in the cell membrane. Its function is as follows. F(1)F(0) ATP synthase produces ATP from ADP in the presence of a proton or sodium gradient. F-type ATPases consist of two structural domains, F(1) containing the extramembraneous catalytic core and F(0) containing the membrane proton channel, linked together by a central stalk and a peripheral stalk. During catalysis, ATP synthesis in the catalytic domain of F(1) is coupled via a rotary mechanism of the central stalk subunits to proton translocation. Functionally, component of the F(0) channel, it forms part of the peripheral stalk, linking F(1) to F(0). This Frankia casuarinae (strain DSM 45818 / CECT 9043 / HFP020203 / CcI3) protein is ATP synthase subunit b.